A 134-amino-acid polypeptide reads, in one-letter code: Large ribosomal subunit protein eL32 (134 aa).

It belongs to the eukaryotic ribosomal protein eL32 family.

In Drosophila melanogaster (Fruit fly), this protein is Large ribosomal subunit protein eL32 (RpL32).